The chain runs to 313 residues: NADH-ubiquinone oxidoreductase chain 1 (313 aa).

The next 8 helical transmembrane spans lie at 6 to 26 (LLSG…FTLL), 71 to 91 (VFPF…LWIL), 105 to 125 (MLLF…AGWF), 149 to 169 (MSLI…SMIM), 173 to 193 (FFVW…VSCV), 220 to 242 (GVGF…VLVI), 255 to 275 (FGMG…WVRA), and 293 to 313 (YLPS…ILNG).

Belongs to the complex I subunit 1 family.

The protein localises to the mitochondrion inner membrane. The catalysed reaction is a ubiquinone + NADH + 5 H(+)(in) = a ubiquinol + NAD(+) + 4 H(+)(out). Core subunit of the mitochondrial membrane respiratory chain NADH dehydrogenase (Complex I) that is believed to belong to the minimal assembly required for catalysis. Complex I functions in the transfer of electrons from NADH to the respiratory chain. The immediate electron acceptor for the enzyme is believed to be ubiquinone. The sequence is that of NADH-ubiquinone oxidoreductase chain 1 (ND1) from Heterololigo bleekeri (Spear squid).